We begin with the raw amino-acid sequence, 461 residues long: Decaprenylphosphoryl-beta-D-ribose oxidase (461 aa).

An FAD-binding PCMH-type domain is found at 19–194 (TAPSVANVLR…MRATIEMTPT (176 aa)). FAD contacts are provided by residues 53–63 (ARGLGRSYGDN), Gly-117, 122–125 (TVGG), 129–132 (CDIH), Ile-184, and Tyr-415.

The protein belongs to the DprE1 family. As to quaternary structure, monomer. Although forming apparent dimer in crystals, DprE1 does not dimerize appreciably in solution. Interacts with DprE2 to form an epimerase complex.

It localises to the periplasm. The catalysed reaction is trans,octa-cis-decaprenylphospho-beta-D-ribofuranose + FAD + H(+) = trans,octa-cis-decaprenylphospho-beta-D-erythro-pentofuranosid-2-ulose + FADH2. Its pathway is cell wall biogenesis; cell wall polysaccharide biosynthesis. Is inhibited by 8-nitro-benzothiazinones (BTZs) such as BTZ043 and PBTZ169; BTZs are a new class of antimycobacterial agents that kill M.tuberculosis in vitro, ex vivo, and in mouse models of tuberculosis. Is also inhibited by dinitrobenzamide derivatives (DNBs), which thus block formation of both cell-wall lipoarabinomannan and arabinogalactan via inhibition of decaprenyl-phospho-arabinose (DPA) synthesis; DNBs show high activity against intracellular growth of M.tuberculosis inside macrophages, including extensively drug resistant (XDR) strains. BTZs and DNBs are suicide inhibitors that act via covalent modification of DprE1; the essential nitro group of these compounds is reduced by DprE1 to a nitroso group, which then specifically reacts with Cys-387 of DprE1 to form an irreversible semimercaptal adduct. Many other compounds with diverse scaffolds were found to act as either covalent (e.g. nitroquinoxalines, nitroimidazoles) or non-covalent (e.g. the benzothiazole derivative TCA1, the 2-carboxyquinoxaline Ty38C, 8-pyrrole-benzothiazinones, 1,4-azaindoles, pyrazolopyridones, 4-aminoquinolone piperidine amides) DprE1 inhibitors. Component of the DprE1-DprE2 complex that catalyzes the 2-step epimerization of decaprenyl-phospho-ribose (DPR) to decaprenyl-phospho-arabinose (DPA), a key precursor that serves as the arabinose donor required for the synthesis of cell-wall arabinans. DprE1 catalyzes the first step of epimerization, namely FAD-dependent oxidation of the C2' hydroxyl of DPR to yield the keto intermediate decaprenyl-phospho-2'-keto-D-arabinose (DPX). The intermediate DPX is then transferred to DprE2 subunit of the epimerase complex, most probably through a 'substrate channel' at the interface of DprE1-DprE2 complex. Can also use farnesyl-phosphoryl-beta-D-ribofuranose (FPR) as substrate in vitro. Functionally, dprE1 is a highly vulnerable and fully validated tuberculosis drug target. This Mycobacterium tuberculosis (strain CDC 1551 / Oshkosh) protein is Decaprenylphosphoryl-beta-D-ribose oxidase.